Reading from the N-terminus, the 394-residue chain is MAKAKFERTKPHVNIGTIGHVDHGKTTLTAAISTVLAKKGQAIAQSYADVDKTPEERERGITINASHVEYETKTRHYAHVDCPGHADYVKNMITGAAQMDGAILVIAASDGVMAQTKEHILLARQVGVPKIVVFLNKCDFMTDPDMQDLVEMEVRELLSKYGFDGDNTPVIRGSGLKALEGDPVWEAKIDELMDAVDSWIPLPERSTDKPFLLAIEDVFTISGRGTVVTGRVERGVLKVNDEVEIVGLKDTQKTVVTGIEMFRKSLDQAEAGDNAGILLRGIKKEDVERGQVLVKPGSIKPHRTFTAKVYILKKEEGGRHTPIVSGYRPQFYFRTTDVTGAISLPAGVDLVMPGDDVEMTVELIAPVAIEDGSKFSIREGGKTVGHGSVIKTSN.

One can recognise a tr-type G domain in the interval 10–204 (KPHVNIGTIG…AVDSWIPLPE (195 aa)). Positions 19-26 (GHVDHGKT) are G1. 19-26 (GHVDHGKT) serves as a coordination point for GTP. Thr-26 contacts Mg(2+). Positions 60–64 (GITIN) are G2. The tract at residues 81-84 (DCPG) is G3. GTP contacts are provided by residues 81-85 (DCPGH) and 136-139 (NKCD). The tract at residues 136-139 (NKCD) is G4. The tract at residues 174–176 (SGL) is G5.

Belongs to the TRAFAC class translation factor GTPase superfamily. Classic translation factor GTPase family. EF-Tu/EF-1A subfamily. Monomer.

It is found in the cytoplasm. The enzyme catalyses GTP + H2O = GDP + phosphate + H(+). In terms of biological role, GTP hydrolase that promotes the GTP-dependent binding of aminoacyl-tRNA to the A-site of ribosomes during protein biosynthesis. The chain is Elongation factor Tu from Ureaplasma parvum serovar 3 (strain ATCC 27815 / 27 / NCTC 11736).